The sequence spans 602 residues: Glutaminase liver isoform, mitochondrial (602 aa).

A mitochondrion-targeting transit peptide spans Met1 to Ala14. Disordered stretches follow at residues Met1–Arg28 and Gln46–Gly67. Substrate is bound at residue Ser219. Lys253 bears the N6-succinyllysine mark. Asn268 is a binding site for substrate. N6-acetyllysine is present on residues Lys279 and Lys284. The substrate site is built by Glu314 and Asn321. Lys329 is subject to N6-acetyllysine. 3 residues coordinate substrate: Tyr347, Tyr399, and Val417. 2 ANK repeats span residues Asp518–Arg551 and Trp552–Gln585.

Belongs to the glutaminase family. In terms of assembly, homotetramer, dimer of dimers. Does not assemble into higher oligomers. Interacts with the PDZ domain of the syntrophin SNTA1. Interacts with the PDZ domain of TAX1BP3. Liver specific.

It is found in the mitochondrion. It carries out the reaction L-glutamine + H2O = L-glutamate + NH4(+). Functionally, plays an important role in the regulation of glutamine catabolism. Promotes mitochondrial respiration and increases ATP generation in cells by catalyzing the synthesis of glutamate and alpha-ketoglutarate. Increases cellular anti-oxidant function via NADH and glutathione production. May play a role in preventing tumor proliferation. This Rattus norvegicus (Rat) protein is Glutaminase liver isoform, mitochondrial (Gls2).